We begin with the raw amino-acid sequence, 86 residues long: Small ribosomal subunit protein bS16 (86 aa).

The protein belongs to the bacterial ribosomal protein bS16 family.

This Methylacidiphilum infernorum (isolate V4) (Methylokorus infernorum (strain V4)) protein is Small ribosomal subunit protein bS16.